The sequence spans 598 residues: F-box/WD repeat-containing protein 8 (598 aa).

The residue at position 1 (Met1) is an N-acetylmethionine. A disordered region spans residues 20–97; it reads SQALRRRRRL…PDRDATEPEP (78 aa). Basic and acidic residues predominate over residues 29 to 44; the sequence is LEAGERRSPRRPEAGA. A compositionally biased stretch (low complexity) spans 51 to 65; that stretch reads GYLGLAQGLLEGAGR. Over residues 73-93 the composition is skewed to basic and acidic residues; sequence RGGDRKDTSSRSRSPPDRDAT. Position 84 is a phosphoserine (Ser84). The residue at position 86 (Ser86) is a Phosphoserine; by MTOR. The region spanning 113–159 is the F-box domain; that stretch reads PFFDVRLPYELAINIFQYLNRRELGLCAQVSKTWKVIAEDEVLWYRL. WD repeat units follow at residues 201–250, 259–299, 300–340, 341–383, 384–429, 430–475, 476–513, and 514–561; these read AVSE…LESE, QPYV…FEHD, ARIQ…SEFE, VQKL…LHYV, YGQP…SKLG, NALG…SAHQ, LGVSAVQMDDWKVVSGGEEGLVSVWDYRMNQKLWEVHS, and RHPV…AYEF.

In terms of assembly, component of the Cul7-RING(FBXW8) complex consisting of CUL7, RBX1, SKP1 and FBXW8; within the complex interacts with CUL7 and SKP1. Interacts with GLMN isoform 1. Interacts with OBSL1, CUL1, CUL2, CCT6B, PFDN5, CCT2, CCT3, CCT6A, CCT7, VBP1, CCDC8, ARF1, TRIP13, PDCD5 and GORASP1. Interacts with MAP4K1/HPK1 (when autophosphorylated). Associated component of the 3M complex. Interacts with POUF51 (when phosphorylated on 'Ser-347'). In terms of processing, phosphorylation at Ser-86 by mTORC2 promotes FBXW8 stabilization, allowing its translocation to the cytosol in response to insulin. Widely expressed. Expressed at higher level in skeletal muscle, cartilage and lung.

It is found in the cytoplasm. Its subcellular location is the perinuclear region. The protein localises to the golgi apparatus. The protein resides in the cytosol. It functions in the pathway protein modification; protein ubiquitination. Functionally, substrate-recognition component of the Cul7-RING(FBXW8) ubiquitin ligase complex, which mediates the ubiquitination and subsequent proteasomal degradation of target proteins. The Cul7-RING(FBXW8) complex mediates ubiquitination and consequent degradation of GORASP1, acting as a component of the ubiquitin ligase pathway that regulates Golgi morphogenesis and dendrite patterning in brain. Mediates ubiquitination and degradation of IRS1 in a mTOR-dependent manner: the Cul7-RING(FBXW8) complex recognizes and binds IRS1 previously phosphorylated by S6 kinase (RPS6KB1 or RPS6KB2). The Cul7-RING(FBXW8) complex also mediates ubiquitination of MAP4K1/HPK1: recognizes and binds autophosphorylated MAP4K1/HPK1, leading to its degradation, thereby affecting cell proliferation and differentiation. The Cul7-RING(FBXW8) complex also mediates ubiquitination of phosphorylated cyclin-D1 (CCND1). The Cul7-RING(FBXW8) complex is however not a major regulator of CCND1 stability during the G1/S transition. Associated component of the 3M complex, suggesting that it mediates some of 3M complex functions. This is F-box/WD repeat-containing protein 8 (Fbxw8) from Mus musculus (Mouse).